A 236-amino-acid polypeptide reads, in one-letter code: Sensory rhodopsin I (236 aa).

Helical transmembrane passes span 6–26 (VVYG…GFLY), 37–57 (ILAA…AMVF), 74–94 (YLDW…TAGA), 98–118 (AIFG…GAVV), 126–146 (ALFG…YLIF), 167–187 (VGLL…GLGF), and 192–212 (GVSI…VYFF). K205 is subject to N6-(retinylidene)lysine.

This sequence belongs to the archaeal/bacterial/fungal opsin family. Interacts with Htr1. In terms of processing, the covalent binding of retinal to the apoprotein, bacterioopsin, generates bacteriorhodopsin.

The protein localises to the membrane. Its function is as follows. Photoattractant rhodopsin. This is Sensory rhodopsin I (sop1) from Haloarcula marismortui (strain ATCC 43049 / DSM 3752 / JCM 8966 / VKM B-1809) (Halobacterium marismortui).